Here is a 281-residue protein sequence, read N- to C-terminus: ATP phosphoribosyltransferase (281 aa).

This sequence belongs to the ATP phosphoribosyltransferase family. Long subfamily. Requires Mg(2+) as cofactor.

Its subcellular location is the cytoplasm. It catalyses the reaction 1-(5-phospho-beta-D-ribosyl)-ATP + diphosphate = 5-phospho-alpha-D-ribose 1-diphosphate + ATP. It functions in the pathway amino-acid biosynthesis; L-histidine biosynthesis; L-histidine from 5-phospho-alpha-D-ribose 1-diphosphate: step 1/9. Its activity is regulated as follows. Feedback inhibited by histidine. Its function is as follows. Catalyzes the condensation of ATP and 5-phosphoribose 1-diphosphate to form N'-(5'-phosphoribosyl)-ATP (PR-ATP). Has a crucial role in the pathway because the rate of histidine biosynthesis seems to be controlled primarily by regulation of HisG enzymatic activity. This chain is ATP phosphoribosyltransferase, found in Corynebacterium diphtheriae (strain ATCC 700971 / NCTC 13129 / Biotype gravis).